The following is a 757-amino-acid chain: Probable inorganic carbon transporter subunit DabA (757 aa).

Zn(2+) contacts are provided by cysteine 321, aspartate 323, histidine 475, and cysteine 490.

It belongs to the inorganic carbon transporter (TC 9.A.2) DabA family. In terms of assembly, forms a complex with DabB. Zn(2+) serves as cofactor.

Its subcellular location is the cell inner membrane. Functionally, part of an energy-coupled inorganic carbon pump. The protein is Probable inorganic carbon transporter subunit DabA of Idiomarina loihiensis (strain ATCC BAA-735 / DSM 15497 / L2-TR).